Consider the following 337-residue polypeptide: Trace amine-associated receptor 5 (337 aa).

Residues 1-38 (MRAVLLPGSGEQPAAFCYQVNGSCPRTVHPLAIRVLIY) lie on the Extracellular side of the membrane. A glycan (N-linked (GlcNAc...) asparagine) is linked at Asn-21. 2 disulfides stabilise this stretch: Cys-24/Cys-188 and Cys-99/Cys-192. Residues 39–59 (LACAVGMLITVLGNLFVVFAV) traverse the membrane as a helical segment. Over 60–70 (SYFKVLHTPTN) the chain is Cytoplasmic. The chain crosses the membrane as a helical span at residues 71–91 (FLLLSLALADMLLGLLVLPLS). The Extracellular segment spans residues 92-109 (TVRSVESCWFFGDFLCRL). The helical transmembrane segment at 110-130 (HTYLDTLFCLTSIFHLCFISI) threads the bilayer. At 131–154 (DRHCAICDPLLYPSKFTVRIALRY) the chain is on the cytoplasmic side. Residues 155–175 (IAAGWGIPAAYTAFFLYTDVV) form a helical membrane-spanning segment. Positions 176-189 (ERALSQWLEEMPCV) are extracellular Loop 2 (ECL2). Residues 176–204 (ERALSQWLEEMPCVGSCQLLFNKFWGWLN) are Extracellular-facing. The helical transmembrane segment at 205-225 (FPAFFIPCLIMISLYLKIFVV) threads the bilayer. Topologically, residues 226-253 (ATRQAQQIRTLSQSLSGAVKRERKAAKT) are cytoplasmic. The helical transmembrane segment at 254 to 274 (LGIAVGIYLVCWLPFTVDTLV) threads the bilayer. Topologically, residues 275 to 284 (DSLLNFVTPP) are extracellular. Residues 285-307 (LVFDIFIWFAYFNSACNPIIYVF) traverse the membrane as a helical segment. The Cytoplasmic portion of the chain corresponds to 308 to 337 (SYRWFRKALKLLLSREILSPRTQTADLFHD).

The protein belongs to the G-protein coupled receptor 1 family.

Its subcellular location is the cell membrane. Functionally, olfactory receptor specific for trimethylamine, a trace amine enriched in the urine of male rats, playing a role in social behavior. Also activated by N-methylpiperidine. Trimethylamine is present at high concentration in the urine of male after puberty and acts as an attractant. Trimethylamine-binding causes a conformation change that triggers signaling via G(s)-class of G alpha proteins (GNAL or GNAS). Also required to provide olfactory input into limbic brain areas to regulate emotional behaviors likely via modulation of the serotonin system. This is Trace amine-associated receptor 5 from Rattus norvegicus (Rat).